The following is a 305-amino-acid chain: tRNA pseudouridine synthase B (305 aa).

The active-site Nucleophile is the Asp38.

This sequence belongs to the pseudouridine synthase TruB family. Type 1 subfamily.

The enzyme catalyses uridine(55) in tRNA = pseudouridine(55) in tRNA. Its function is as follows. Responsible for synthesis of pseudouridine from uracil-55 in the psi GC loop of transfer RNAs. In Latilactobacillus sakei subsp. sakei (strain 23K) (Lactobacillus sakei subsp. sakei), this protein is tRNA pseudouridine synthase B.